Here is an 85-residue protein sequence, read N- to C-terminus: Small ribosomal subunit protein uS17 (85 aa).

The protein belongs to the universal ribosomal protein uS17 family. Part of the 30S ribosomal subunit.

In terms of biological role, one of the primary rRNA binding proteins, it binds specifically to the 5'-end of 16S ribosomal RNA. In Rhodospirillum centenum (strain ATCC 51521 / SW), this protein is Small ribosomal subunit protein uS17.